The sequence spans 209 residues: Thiamine-phosphate synthase (209 aa).

Residues Gln36 to Lys40 and Asn68 contribute to the 4-amino-2-methyl-5-(diphosphooxymethyl)pyrimidine site. Mg(2+) is bound by residues Asp69 and Asp87. Residue Thr106 participates in 4-amino-2-methyl-5-(diphosphooxymethyl)pyrimidine binding. 2-[(2R,5Z)-2-carboxy-4-methylthiazol-5(2H)-ylidene]ethyl phosphate is bound at residue Ser133–Thr135. Residue Lys136 coordinates 4-amino-2-methyl-5-(diphosphooxymethyl)pyrimidine. Residue Gly163 participates in 2-[(2R,5Z)-2-carboxy-4-methylthiazol-5(2H)-ylidene]ethyl phosphate binding.

Belongs to the thiamine-phosphate synthase family. The cofactor is Mg(2+).

It catalyses the reaction 2-[(2R,5Z)-2-carboxy-4-methylthiazol-5(2H)-ylidene]ethyl phosphate + 4-amino-2-methyl-5-(diphosphooxymethyl)pyrimidine + 2 H(+) = thiamine phosphate + CO2 + diphosphate. The enzyme catalyses 2-(2-carboxy-4-methylthiazol-5-yl)ethyl phosphate + 4-amino-2-methyl-5-(diphosphooxymethyl)pyrimidine + 2 H(+) = thiamine phosphate + CO2 + diphosphate. The catalysed reaction is 4-methyl-5-(2-phosphooxyethyl)-thiazole + 4-amino-2-methyl-5-(diphosphooxymethyl)pyrimidine + H(+) = thiamine phosphate + diphosphate. The protein operates within cofactor biosynthesis; thiamine diphosphate biosynthesis; thiamine phosphate from 4-amino-2-methyl-5-diphosphomethylpyrimidine and 4-methyl-5-(2-phosphoethyl)-thiazole: step 1/1. Condenses 4-methyl-5-(beta-hydroxyethyl)thiazole monophosphate (THZ-P) and 2-methyl-4-amino-5-hydroxymethyl pyrimidine pyrophosphate (HMP-PP) to form thiamine monophosphate (TMP). The polypeptide is Thiamine-phosphate synthase (Pseudomonas aeruginosa (strain LESB58)).